The sequence spans 498 residues: MSRNGAKYRDLRDFIARLEAEGELRRIGASVDPNLEITEICDRTLKSEGPALLFEHPKGSAVPLLGNLFGTPRRVALGMGEVSVGALRQVGVLLASLKEPEPPKGMRDAFEKVPLYRQVLHMAPKEVRNAPCQQEVLRGSDIDLGRYPIQTCWPGDAGPLITWPLVITRGPYKARQNLGIYRQQVIGRNKTIMRWLAHRGGALDFRDWQEARPGEPFPVAVALGADPATMLGAVTPVPDTLSEYGFAGLLRGARTEVTPCILSDLQVPASAEIVLEGFLYPGETAPEGPFGDHTGYYNEVESFPVFTIECITQRHSPIYHSTYTGRPPDEPAVLGVALNEVFVPILQKQFPEVVDFYLPPEGCSYRLAVVSMKKQYAGHAKRVMFGVWSFLRQFMYTKFVIVVDDDVDARNWKDVVWAMTTRMDPARDLTLIENTPIDYLDFASPVSGLGSKVGFDATHKWPGETNREWGRPITMDAAVRRRVDEIWDSLGIFAGSRG.

A Mn(2+)-binding site is contributed by asparagine 177. Residues 180–182 (IYR), 194–196 (RWL), and 199–200 (RG) contribute to the prenylated FMN site. Glutamate 243 serves as a coordination point for Mn(2+). Aspartate 292 serves as the catalytic Proton donor.

This sequence belongs to the UbiD family. In terms of assembly, homohexamer. Prenylated FMN is required as a cofactor. Requires Mn(2+) as cofactor.

The protein localises to the cell membrane. It catalyses the reaction a 4-hydroxy-3-(all-trans-polyprenyl)benzoate + H(+) = a 2-(all-trans-polyprenyl)phenol + CO2. Its pathway is cofactor biosynthesis; ubiquinone biosynthesis. In terms of biological role, catalyzes the decarboxylation of 3-octaprenyl-4-hydroxy benzoate to 2-octaprenylphenol, an intermediate step in ubiquinone biosynthesis. The protein is 3-octaprenyl-4-hydroxybenzoate carboxy-lyase of Methylococcus capsulatus (strain ATCC 33009 / NCIMB 11132 / Bath).